The sequence spans 954 residues: MTTPTEFQFTDYQPYDFANRRHIGPSPAEMTDMLKVIGYNSLDGLIDATLPPSIRQKAPLVWGAPMTEREALDKLRETANKNKVLVSLIGQGYYGTITPPVIQRNILENPAWYTAYTPYQPEISQGRLEALLNYQTMICDLTGLDVANASLLDEATAAAEGMAIAERVAKSKAKAFFVDADCHPQTIALIRTRAEPLGWSVIVGNPVTDLDPVDVFGAIFQYPGTHGHVHDFTGLISRLHQTGAIAIVAADILALTLLKSPGEMGADIAVGSSQRFGVPVGYGGPHAAYMSVKDAIKRSMPGRLVGVSVDARGNRAYRLSLQTREQHIRREKATSNICTAQVLLAVMASMYAVFHGPKGIKAIAQQVHQKAVLMAKGLEKLGYKVEPETFFDTITVDVGHMQGLILRAAVAEGVNLRKVGETKIGMSLDERTRPATLEAVWRAFGGNFTIADFEPSYRLPKGLLRTSDYLTHPIFHMNRAESEMTRYIRRLSDRDLALDRSMIPLGSCTMKLNATAEMLPITWPEFSDIHPFVPADQALGYREMIDDLIEKLCAVTGYDAFSMQPNSGAQGEYAGLLTIRNYHIANGDGHRDVCLIPTSAHGTNPASAQMVGMKVVVVKVRENGDIDLDDFRAKAEQHAANLACCMITYPSTHGVFEETVKEICDLVHEHGGQVYLDGANMNAMVGLSRPGDIGSDVSHLNLHKTFCIPHGGGGPGMGPIGVKAHLAPYLPGHPETDGRPGAVSAAAFGSASILPISWSYCLMMGGEGLTQATKVAILNANYIAARLRGAYDVLYKSETGRVAHECIIDTRPLVDSSGVTVDDVAKRLIDCGFHAPTMSWPVAGTLMIEPTESETKAELDRFCEAILAIREEARAIEDGRMDKVNNPLKNAPHTVEDLVGEWDRPYSREQACFPPGAFRVDKYWSPVNRVDNVYGDRNLICTCPPVESYAEAAE.

The residue at position 704 (lysine 704) is an N6-(pyridoxal phosphate)lysine.

Belongs to the GcvP family. In terms of assembly, the glycine cleavage system is composed of four proteins: P, T, L and H. The cofactor is pyridoxal 5'-phosphate.

The enzyme catalyses N(6)-[(R)-lipoyl]-L-lysyl-[glycine-cleavage complex H protein] + glycine + H(+) = N(6)-[(R)-S(8)-aminomethyldihydrolipoyl]-L-lysyl-[glycine-cleavage complex H protein] + CO2. Functionally, the glycine cleavage system catalyzes the degradation of glycine. The P protein binds the alpha-amino group of glycine through its pyridoxal phosphate cofactor; CO(2) is released and the remaining methylamine moiety is then transferred to the lipoamide cofactor of the H protein. In Rhizobium johnstonii (strain DSM 114642 / LMG 32736 / 3841) (Rhizobium leguminosarum bv. viciae), this protein is Glycine dehydrogenase (decarboxylating).